The primary structure comprises 345 residues: Protein-arginine kinase (345 aa).

The Phosphagen kinase C-terminal domain occupies 15 to 245 (LVISSRIRLA…LQIINQEIIS (231 aa)). ATP is bound by residues 18–22 (SSRIR), His-82, Arg-116, 167–171 (RASVM), and 198–203 (RGLYGE). The RDXXRA motif of the pArg binding pocket involved in allosteric regulation signature appears at 328 to 333 (RDFNRA).

This sequence belongs to the ATP:guanido phosphotransferase family.

The catalysed reaction is L-arginyl-[protein] + ATP = N(omega)-phospho-L-arginyl-[protein] + ADP + H(+). Its activity is regulated as follows. Appears to be allosterically activated by the binding of pArg-containing polypeptides to the pArg-binding pocket localized in the C-terminal domain of McsB. In terms of biological role, catalyzes the specific phosphorylation of arginine residues in proteins. The chain is Protein-arginine kinase from Clostridium kluyveri (strain NBRC 12016).